The sequence spans 174 residues: Gamma-crystallin C (174 aa).

Beta/gamma crystallin 'Greek key' domains lie at 2–40 (GKITFYEDRGFQGRCYQCSSDCPNLQPYFSRCNSIRVDS) and 41–83 (GCWM…CLIS). Cys-23 carries the post-translational modification S-methylcysteine. The segment at 84–87 (DTSS) is connecting peptide. Beta/gamma crystallin 'Greek key' domains follow at residues 88–128 (HRLR…HVLE) and 129–171 (GCWV…RRVV).

This sequence belongs to the beta/gamma-crystallin family.

Crystallins are the dominant structural components of the vertebrate eye lens. The sequence is that of Gamma-crystallin C (CRYGC) from Bos taurus (Bovine).